The chain runs to 89 residues: Small ribosomal subunit protein uS15 (89 aa).

This sequence belongs to the universal ribosomal protein uS15 family. In terms of assembly, part of the 30S ribosomal subunit. Forms a bridge to the 50S subunit in the 70S ribosome, contacting the 23S rRNA.

Its function is as follows. One of the primary rRNA binding proteins, it binds directly to 16S rRNA where it helps nucleate assembly of the platform of the 30S subunit by binding and bridging several RNA helices of the 16S rRNA. Functionally, forms an intersubunit bridge (bridge B4) with the 23S rRNA of the 50S subunit in the ribosome. This chain is Small ribosomal subunit protein uS15, found in Jannaschia sp. (strain CCS1).